Reading from the N-terminus, the 573-residue chain is Probable D-xylulose kinase A (573 aa).

Histidine 97, arginine 168, aspartate 284, and asparagine 285 together coordinate substrate. ATP contacts are provided by residues tryptophan 366, 471–472 (GG), and asparagine 475.

Belongs to the FGGY kinase family.

It is found in the cytoplasm. It carries out the reaction D-xylulose + ATP = D-xylulose 5-phosphate + ADP + H(+). Its function is as follows. Highly specific D-xylulose kinase which participates in the catabolism of xylose. Xylose is a major component of hemicelluloses such as xylan. Most fungi utilize D-xylose via three enzymatic reactions, xylose reductase (XR), xylitol dehydrogenase (XDH), and xylulokinase, to form xylulose 5-phosphate, which enters pentose phosphate pathway. In Aspergillus fumigatus (strain ATCC MYA-4609 / CBS 101355 / FGSC A1100 / Af293) (Neosartorya fumigata), this protein is Probable D-xylulose kinase A (xkiA).